A 707-amino-acid polypeptide reads, in one-letter code: SEC14-like protein 5 (707 aa).

Residues 3–175 (QKYQSPVRVY…YLNELISQGI (173 aa)) enclose the PRELI/MSF1 domain. Polar residues predominate over residues 201–211 (RSNQAEQTASQ). The segment at 201–232 (RSNQAEQTASQGPCKADAGSHSLAAEPSTPDT) is disordered. The 177-residue stretch at 315–491 (PPRVLEEYYA…FLGGECVCNI (177 aa)) folds into the CRAL-TRIO domain. One can recognise a GOLD domain in the interval 518–667 (TETIYQSSCV…KCKLMYYFEV (150 aa)). Polar residues predominate over residues 686–695 (FSQLSGVTNT). A disordered region spans residues 686-707 (FSQLSGVTNTSSKSHSSSLISR). The segment covering 696–707 (SSKSHSSSLISR) has biased composition (low complexity).

The polypeptide is SEC14-like protein 5 (sec14l1) (Xenopus tropicalis (Western clawed frog)).